A 111-amino-acid chain; its full sequence is Small ribosomal subunit protein bS6 (111 aa).

This sequence belongs to the bacterial ribosomal protein bS6 family.

In terms of biological role, binds together with bS18 to 16S ribosomal RNA. The sequence is that of Small ribosomal subunit protein bS6 from Francisella tularensis subsp. tularensis (strain FSC 198).